A 145-amino-acid polypeptide reads, in one-letter code: MSKKAIKGYINLIIPAAGATPAPPIGPALGQRKVNIAAFCKDFNDATNGMEKGVPLPTVITVYEDSSFSFKVKTPPASYFLKKYAKITKGSSATKKEAMVGKVTIDDCREIAKLKISDLNTKNIEAATKIICGSAASMGLEVVGN.

Belongs to the universal ribosomal protein uL11 family. As to quaternary structure, part of the ribosomal stalk of the 50S ribosomal subunit. Interacts with L10 and the large rRNA to form the base of the stalk. L10 forms an elongated spine to which L12 dimers bind in a sequential fashion forming a multimeric L10(L12)X complex. Post-translationally, one or more lysine residues are methylated.

Functionally, forms part of the ribosomal stalk which helps the ribosome interact with GTP-bound translation factors. This is Large ribosomal subunit protein uL11 from Rickettsia prowazekii (strain Madrid E).